The primary structure comprises 416 residues: 4-hydroxy-3-methylbut-2-en-1-yl diphosphate synthase (flavodoxin) (416 aa).

Residues Cys304, Cys307, Cys350, and Glu357 each contribute to the [4Fe-4S] cluster site.

This sequence belongs to the IspG family. The cofactor is [4Fe-4S] cluster.

It carries out the reaction (2E)-4-hydroxy-3-methylbut-2-enyl diphosphate + oxidized [flavodoxin] + H2O + 2 H(+) = 2-C-methyl-D-erythritol 2,4-cyclic diphosphate + reduced [flavodoxin]. The protein operates within isoprenoid biosynthesis; isopentenyl diphosphate biosynthesis via DXP pathway; isopentenyl diphosphate from 1-deoxy-D-xylulose 5-phosphate: step 5/6. Converts 2C-methyl-D-erythritol 2,4-cyclodiphosphate (ME-2,4cPP) into 1-hydroxy-2-methyl-2-(E)-butenyl 4-diphosphate. The chain is 4-hydroxy-3-methylbut-2-en-1-yl diphosphate synthase (flavodoxin) from Agrobacterium fabrum (strain C58 / ATCC 33970) (Agrobacterium tumefaciens (strain C58)).